Here is a 492-residue protein sequence, read N- to C-terminus: PHO85 cyclin-8 (492 aa).

Disordered stretches follow at residues 1 to 32, 143 to 163, and 223 to 252; these read MAND…DNDS, SGSG…GTGR, and KVNS…ENES. Positions 8-20 are enriched in polar residues; it reads NKSLINDALTRSM. Residues 23 to 32 show a composition bias toward acidic residues; it reads FYDDDDDNDS. Ser-32 is modified (phosphoserine).

The protein belongs to the cyclin family. PHO80 subfamily. As to quaternary structure, forms a cyclin-CDK complex with PHO85.

The protein resides in the cytoplasm. It is found in the nucleus. Cyclin partner of the cyclin-dependent kinase (CDK) PHO85. Together with cyclin PCL10, negatively controls glycogen accumulation under favorable growth conditions. Involved in phosphorylation and negative regulation of glycogen synthase GSY2. Also has minor GLC8 kinase activity. This chain is PHO85 cyclin-8 (PCL8), found in Saccharomyces cerevisiae (strain ATCC 204508 / S288c) (Baker's yeast).